A 412-amino-acid chain; its full sequence is 4-hydroxyphenylpyruvate dioxygenase (412 aa).

VOC domains are found at residues 31 to 179 (GYDH…LISR) and 209 to 369 (RIDH…LFTK). Residues His-212, His-295, and Glu-380 each contribute to the Fe cation site.

Belongs to the 4HPPD family. Fe cation serves as cofactor.

The enzyme catalyses 3-(4-hydroxyphenyl)pyruvate + O2 = homogentisate + CO2. The protein operates within amino-acid degradation; L-phenylalanine degradation; acetoacetate and fumarate from L-phenylalanine: step 3/6. The chain is 4-hydroxyphenylpyruvate dioxygenase from Neurospora crassa (strain ATCC 24698 / 74-OR23-1A / CBS 708.71 / DSM 1257 / FGSC 987).